A 390-amino-acid polypeptide reads, in one-letter code: Elongation factor Tu 1 (390 aa).

One can recognise a tr-type G domain in the interval 10-201 (KPHVNVGTIG…LDEYVAVPPR (192 aa)). The segment at 19–26 (GHVDHGKT) is G1. Residue 19–26 (GHVDHGKT) coordinates GTP. Position 26 (T26) interacts with Mg(2+). Positions 55–59 (GITIA) are G2. The tract at residues 76-79 (DCPG) is G3. Residues 76 to 80 (DCPGH) and 131 to 134 (NKAD) contribute to the GTP site. A G4 region spans residues 131–134 (NKAD). Residues 168-170 (SAL) form a G5 region.

This sequence belongs to the TRAFAC class translation factor GTPase superfamily. Classic translation factor GTPase family. EF-Tu/EF-1A subfamily. As to quaternary structure, monomer.

It localises to the cytoplasm. It carries out the reaction GTP + H2O = GDP + phosphate + H(+). GTP hydrolase that promotes the GTP-dependent binding of aminoacyl-tRNA to the A-site of ribosomes during protein biosynthesis. This chain is Elongation factor Tu 1, found in Wolbachia pipientis wMel.